The sequence spans 379 residues: UPF0754 protein BpOF4_11355 (379 aa).

The next 2 membrane-spanning stretches (helical) occupy residues 6–26 (FIGF…SLAI) and 359–379 (LGAL…LFIG).

The protein belongs to the UPF0754 family.

It is found in the cell membrane. This chain is UPF0754 protein BpOF4_11355, found in Alkalihalophilus pseudofirmus (strain ATCC BAA-2126 / JCM 17055 / OF4) (Bacillus pseudofirmus).